Here is a 320-residue protein sequence, read N- to C-terminus: Ferrochelatase (320 aa).

Positions 194 and 275 each coordinate Fe cation.

The protein belongs to the ferrochelatase family. Monomer.

The protein resides in the cytoplasm. The catalysed reaction is heme b + 2 H(+) = protoporphyrin IX + Fe(2+). Its pathway is porphyrin-containing compound metabolism; protoheme biosynthesis; protoheme from protoporphyrin-IX: step 1/1. Its function is as follows. Catalyzes the ferrous insertion into protoporphyrin IX. The chain is Ferrochelatase from Salmonella schwarzengrund (strain CVM19633).